A 69-amino-acid chain; its full sequence is Putative membrane protein insertion efficiency factor (69 aa).

This sequence belongs to the UPF0161 family.

The protein localises to the cell membrane. Its function is as follows. Could be involved in insertion of integral membrane proteins into the membrane. In Clostridium botulinum (strain Okra / Type B1), this protein is Putative membrane protein insertion efficiency factor.